The sequence spans 1216 residues: DNA polymerase subunit gamma-1 (1216 aa).

Residues 27–37 (SSSVLDPVPSD) are compositionally biased toward low complexity. The interval 27 to 50 (SSSVLDPVPSDGQPQSQMPSSENG) is disordered. A compositionally biased stretch (polar residues) spans 38 to 50 (GQPQSQMPSSENG). Residues 179 to 183 (VFDVE) carry the Exo I motif. D181 (exonuclease activity) is an active-site residue. Residues 250 to 258 (VGHNVSFDR) carry the Exo II motif. S289 provides a ligand contact to DNA. Over residues 301-314 (GKHKTQHPTKRGQK) the composition is skewed to basic residues. Positions 301–321 (GKHKTQHPTKRGQKSQKNANG) are disordered. An Exo III motif is present at residues 377-385 (YCARDVWAT). Positions 488-518 (TASASKLPIEGAGPFGDPMDQEDPGPPSEEE) are disordered. The tract at residues 491 to 552 (ASKLPIEGAG…RPQHLPGHPG (62 aa)) is accessory-interacting determinant. Acidic residues predominate over residues 506–518 (MDQEDPGPPSEEE). RNA is bound at residue R560. S574 lines the DNA pocket. Positions 731, 740, and 745 each coordinate RNA. DNA-binding residues include K783 and T826. Residues 835–841 (TWLTASN) are trigger loop. RNA contacts are provided by S840 and R846. Residues 864-873 (VGADVDSQEL) carry the Pol A motif. A 2'-deoxyribonucleoside 5'-triphosphate contacts are provided by D867, V868, S870, E872, R920, K924, and Y928. Positions 867 and 868 each coordinate Mg(2+). The Pol B motif lies at 920–935 (REHAKVFNYGRIYGAG). DNA-binding residues include T1071 and S1072. Positions 1111 to 1118 (HDEVRYLV) match the Pol C motif. Position 1112 (D1112) interacts with a 2'-deoxyribonucleoside 5'-triphosphate. Residue D1112 coordinates Mg(2+).

The protein belongs to the DNA polymerase type-A family. In terms of assembly, heterotrimer composed of a catalytic subunit and a homodimer of accessory subunits (POLG:POLG2). Interacts with TTC3. Interacts with LIG3. Mg(2+) serves as cofactor.

It localises to the mitochondrion. The protein resides in the mitochondrion matrix. It is found in the mitochondrion nucleoid. It carries out the reaction DNA(n) + a 2'-deoxyribonucleoside 5'-triphosphate = DNA(n+1) + diphosphate. It catalyses the reaction a 3'-end 2'-deoxyribonucleotidyl-deoxyribonucleotide-DNA + H2O = a 3'-end 2'-deoxyribonucleotide-DNA + a 2'-deoxyribonucleoside 5'-phosphate + H(+). The enzyme catalyses a 5'-end 2'-deoxyribose-2'-deoxyribonucleotide-DNA = (2E,4S)-4-hydroxypenten-2-al-5-phosphate + a 5'-end 5'-phospho-2'-deoxyribonucleoside-DNA + H(+). Inhibited by dideoxynucleotides such as antiviral agent zalcitabine. In terms of biological role, catalytic subunit of DNA polymerase gamma solely responsible for replication of mitochondrial DNA (mtDNA). Replicates both heavy and light strands of the circular mtDNA genome using a single-stranded DNA template, RNA primers and the four deoxyribonucleoside triphosphates as substrates. Has 5' -&gt; 3' polymerase activity. Functionally interacts with TWNK and SSBP1 at the replication fork to form a highly processive replisome, where TWNK unwinds the double-stranded DNA template prior to replication and SSBP1 covers the parental heavy strand to enable continuous replication of the entire mitochondrial genome. A single nucleotide incorporation cycle includes binding of the incoming nucleotide at the insertion site, a phosphodiester bond formation reaction that extends the 3'-end of the primer DNA, and translocation of the primer terminus to the post-insertion site. After completing replication of a mtDNA strand, mediates 3' -&gt; 5' exonucleolytic degradation at the nick to enable proper ligation. Highly accurate due to high nucleotide selectivity and 3' -&gt; 5' exonucleolytic proofreading. Proficiently corrects base substitutions, single-base additions and deletions in non-repetitive sequences and short repeats, but displays lower proofreading activity when replicating longer homopolymeric stretches. Exerts exonuclease activity toward single-stranded DNA and double-stranded DNA containing 3'-terminal mispairs. When a misincorporation occurs, transitions from replication to a pro-nucleolytic editing mode and removes the missincorporated nucleoside in the exonuclease active site. Proceeds via an SN2 nucleolytic mechanism in which Asp-198 catalyzes phosphodiester bond hydrolysis and Glu-200 stabilizes the leaving group. As a result the primer strand becomes one nucleotide shorter and is positioned in the post-insertion site, ready to resume DNA synthesis. Exerts 5'-deoxyribose phosphate (dRP) lyase activity and mediates repair-associated mtDNA synthesis (gap filling) in base-excision repair pathway. Catalyzes the release of the 5'-terminal 2-deoxyribose-5-phosphate sugar moiety from incised apurinic/apyrimidinic (AP) sites to produce a substrate for DNA ligase. The dRP lyase reaction does not require divalent metal ions and likely proceeds via a Schiff base intermediate in a beta-elimination reaction mechanism. This Rattus norvegicus (Rat) protein is DNA polymerase subunit gamma-1.